The chain runs to 443 residues: Endonuclease CUE2 (443 aa).

CUE domains are found at residues 8 to 51 (DHES…KEND) and 55 to 98 (TVDN…NYET). The Smr domain maps to 347-443 (LDFHGFLPSE…YFRIEGKKKK (97 aa)).

Functionally, mRNA endonuclease involved in the No-Go Decay (NGD) pathway, which catalyzes mRNA cleavage and degradation in response to ribosome collisions. Acts downstream of the ribosome collision sensor HEL2. Specifically recognizes and binds RPS7/eS7 polyubiquitinated by MOT2/NOT4 and HEL2, promoting CUE2 recruitment to stalled ribosomes, where it mediates mRNA cleavage upstream of the colliding ribosome. Also mediates mRNA cleavage within colliding ribosomes: recruited to colliding ribosomes downstream of the RQT (ribosome quality control trigger) complex following disassembly of stalled ribosomes and cleaves mRNAs partially released from the colliding ribosome. This is Endonuclease CUE2 from Saccharomyces cerevisiae (strain ATCC 204508 / S288c) (Baker's yeast).